The sequence spans 204 residues: Rho GDP-dissociation inhibitor 1 (204 aa).

The tract at residues 1 to 36 is disordered; that stretch reads MAEQEPTAEQLAQIAAENEEDEHSVNYKPPAQKSIQ. At A2 the chain carries N-acetylalanine. A Phosphoserine modification is found at S34. K43 is modified (N6-acetyllysine). Position 47 is a phosphoserine (S47). Residues 66-83 form a hydrophobic region; the sequence is NVPNVVVTRLTLVCSTAP. S101 carries the post-translational modification Phosphoserine; by PKA. K105 carries the post-translational modification N6-acetyllysine. S115 carries the post-translational modification Phosphoserine; by PKC. N6-acetyllysine is present on K127. Residues K138 and K141 each participate in a glycyl lysine isopeptide (Lys-Gly) (interchain with G-Cter in SUMO1); alternate cross-link. Glycyl lysine isopeptide (Lys-Gly) (interchain with G-Cter in SUMO2); alternate cross-links involve residues K138 and K141. K141 bears the N6-acetyllysine; alternate mark. Position 141 is an N6-succinyllysine; alternate (K141). K178 carries the N6-acetyllysine modification.

This sequence belongs to the Rho GDI family. Monomer. Interacts with FER. Interacts with PLXNB3. Forms a heterodimer with RAC1. Interacts with RHOA, the affinity is increased by three orders of magnitude when RHOA is prenylated. Interacts with PSMD10; the interaction increases ARHGDIA association with RHOA, leading to ARHGDIA-mediated inactivation of RHOA and ROCK and prolonged AKT activation. Interacts with KANK2; the interaction is direct and may regulate the interaction of ARHGDIA with RHOA, RAC1 and CDC42. Interacts with RHOC. Interacts with CDC42. Interacts with NGFR (via death domain); NGFR binding decreases the affinity for RHOA. In terms of tissue distribution, brain, lung, thymus, spleen, small intestine, and kidney, and weakly in heart and liver.

It localises to the cytoplasm. Controls Rho proteins homeostasis. Regulates the GDP/GTP exchange reaction of the Rho proteins by inhibiting the dissociation of GDP from them, and the subsequent binding of GTP to them. Retains Rho proteins such as CDC42, RAC1 and RHOA in an inactive cytosolic pool, regulating their stability and protecting them from degradation. Actively involved in the recycling and distribution of activated Rho GTPases in the cell, mediates extraction from membranes of both inactive and activated molecules due its exceptionally high affinity for prenylated forms. Through the modulation of Rho proteins, may play a role in cell motility regulation. In glioma cells, inhibits cell migration and invasion by mediating the signals of SEMA5A and PLXNB3 that lead to inactivation of RAC1. This Bos taurus (Bovine) protein is Rho GDP-dissociation inhibitor 1 (ARHGDIA).